The primary structure comprises 92 residues: Cell division protein FtsB (92 aa).

Residues 1-3 (MRL) are Cytoplasmic-facing. The helical transmembrane segment at 4–21 (FIFLLVAVLLLFQYDFWF) threads the bilayer. Residues 22–92 (GKNGYLDYKR…IFYHIVKEQK (71 aa)) lie on the Periplasmic side of the membrane. Positions 26–74 (YLDYKRTAQQIAQHKQENEKLSQRNQVVAAEIKDLKQGVEAIEERARFQ) form a coiled coil.

It belongs to the FtsB family. As to quaternary structure, part of a complex composed of FtsB, FtsL and FtsQ.

Its subcellular location is the cell inner membrane. Functionally, essential cell division protein. May link together the upstream cell division proteins, which are predominantly cytoplasmic, with the downstream cell division proteins, which are predominantly periplasmic. The sequence is that of Cell division protein FtsB from Pasteurella multocida (strain Pm70).